The chain runs to 455 residues: Cysteinylglycine-S-conjugate dipeptidase (455 aa).

His-92 contributes to the Zn(2+) binding site. Asp-94 is a catalytic residue. Residue Asp-125 participates in Zn(2+) binding. Glu-158 acts as the Proton acceptor in catalysis. Residues Glu-159, Glu-163, and His-428 each contribute to the Zn(2+) site.

The protein belongs to the peptidase M20F family. The cofactor is Zn(2+).

The enzyme catalyses an S-substituted L-cysteinylglycine + H2O = an S-substituted L-cysteine + glycine. The catalysed reaction is S-(1-hydroxy-3-methylhexan-3-yl)-L-cysteinylglycine + H2O = S-(1-hydroxy-3-methylhexan-3-yl)-L-cysteine + glycine. It carries out the reaction S-benzyl-L-cysteinylglycine + H2O = S-benzyl-L-cysteine + glycine. In terms of biological role, metallopeptidase that hydrolyzes the Cys-Gly bond of Cys-Gly-S-conjugates. Involved in the formation of the human body odorant 3-methyl-3-sulfanylhexan-1-ol (3M3SH) from odorless axilla secretions. Catalyzes the hydrolysis of the Cys-Gly bond of the Cys-Gly-S-conjugate of 3M3SH, a key precursor secreted by apocrine glands in human axilla skin. The Cys-S-conjugate obtained is then cleaved by the Cys-S-conjugate beta-lyase MetC, which finally releases 3M3SH. The protein is Cysteinylglycine-S-conjugate dipeptidase of Corynebacterium striatum.